The chain runs to 469 residues: Neuraminidase (469 aa).

At 1-6 the chain is on the intravirion side; the sequence is MNPNQK. A helical membrane pass occupies residues 7–29; it reads IITIGSVSLTIATVCFLMQIAIL. Residues 11 to 33 are involved in apical transport and lipid raft association; sequence GSVSLTIATVCFLMQIAILATTV. Over 30–469 the chain is Virion surface; the sequence is ATTVTLHFKQ…DGANINFMPI (440 aa). Residues 36-88 are hypervariable stalk region; it reads HFKQNECNPPANNQVVPCEPIIIERNITEIVYLNNITIEKEVCPEVAEYRNWS. N-linked (GlcNAc...) asparagine; by host glycans are attached at residues N61, N70, and N86. Residues 91 to 469 form a head of neuraminidase region; sequence QCQITGFAPF…DGANINFMPI (379 aa). 8 disulfides stabilise this stretch: C92-C417, C124-C129, C183-C230, C232-C237, C278-C291, C280-C289, C318-C337, and C421-C447. Position 118 (R118) interacts with substrate. Residue N146 is glycosylated (N-linked (GlcNAc...) asparagine; by host). The Proton donor/acceptor role is filled by D151. R152 contacts substrate. N200 and N234 each carry an N-linked (GlcNAc...) asparagine; by host glycan. Residue 276 to 277 coordinates substrate; the sequence is EE. Substrate is bound at residue R292. The Ca(2+) site is built by D293, G297, and D324. A disordered region spans residues 324 to 349; the sequence is DTPRSDDSSSNSNCRDPNNERGNPGV. Residue R371 coordinates substrate. N-linked (GlcNAc...) asparagine; by host glycosylation occurs at N402. Y406 functions as the Nucleophile in the catalytic mechanism.

It belongs to the glycosyl hydrolase 34 family. Homotetramer. Requires Ca(2+) as cofactor. Post-translationally, N-glycosylated.

The protein resides in the virion membrane. It is found in the host apical cell membrane. The enzyme catalyses Hydrolysis of alpha-(2-&gt;3)-, alpha-(2-&gt;6)-, alpha-(2-&gt;8)- glycosidic linkages of terminal sialic acid residues in oligosaccharides, glycoproteins, glycolipids, colominic acid and synthetic substrates.. Inhibited by the neuraminidase inhibitors zanamivir (Relenza) and oseltamivir (Tamiflu). These drugs interfere with the release of progeny virus from infected cells and are effective against all influenza strains. Resistance to neuraminidase inhibitors is quite rare. Catalyzes the removal of terminal sialic acid residues from viral and cellular glycoconjugates. Cleaves off the terminal sialic acids on the glycosylated HA during virus budding to facilitate virus release. Additionally helps virus spread through the circulation by further removing sialic acids from the cell surface. These cleavages prevent self-aggregation and ensure the efficient spread of the progeny virus from cell to cell. Otherwise, infection would be limited to one round of replication. Described as a receptor-destroying enzyme because it cleaves a terminal sialic acid from the cellular receptors. May facilitate viral invasion of the upper airways by cleaving the sialic acid moieties on the mucin of the airway epithelial cells. Likely to plays a role in the budding process through its association with lipid rafts during intracellular transport. May additionally display a raft-association independent effect on budding. Plays a role in the determination of host range restriction on replication and virulence. Sialidase activity in late endosome/lysosome traffic seems to enhance virus replication. This Influenza A virus (strain A/Turkey/Wisconsin/1/1966 H9N2) protein is Neuraminidase.